A 458-amino-acid polypeptide reads, in one-letter code: 5'-adenylylsulfate reductase 3, chloroplastic (458 aa).

Residues Met-1–Asp-24 are disordered. A chloroplast-targeting transit peptide spans Met-1–Val-69. Residues Ser-8–Ser-23 are compositionally biased toward low complexity. The reductase domain stretch occupies residues Ala-70–Gly-319. The region spanning Ala-337–Arg-458 is the Thioredoxin domain. Active-site nucleophile residues include Cys-378 and Cys-381. Cys-378 and Cys-381 form a disulfide bridge.

Belongs to the APS reductase family. The cofactor is [4Fe-4S] cluster. In terms of tissue distribution, leaves, roots and stem.

The protein localises to the plastid. It localises to the chloroplast. The enzyme catalyses glutathione disulfide + sulfite + AMP + 2 H(+) = adenosine 5'-phosphosulfate + 2 glutathione. Stimulated by sodium sulfate &gt; ammonium sulfate. Reduces sulfate for Cys biosynthesis. Substrate preference is adenosine-5'-phosphosulfate (APS) &gt;&gt; 3'-phosphoadenosine-5'-phosphosulfate (PAPS). Uses glutathione or DTT as source of protons. This chain is 5'-adenylylsulfate reductase 3, chloroplastic (APR3), found in Arabidopsis thaliana (Mouse-ear cress).